We begin with the raw amino-acid sequence, 294 residues long: Protoheme IX farnesyltransferase 1 (294 aa).

Helical transmembrane passes span 8–28, 35–55, 82–102, 107–127, 132–152, 162–182, 208–228, 229–249, and 263–283; these read VTKP…FLLA, PWLM…GCAI, AMAA…LLIA, AAVF…SLYM, VYGT…GYCA, LILL…IAIF, IVLY…SGYT, GAAF…MALR, and QVFA…AVDY.

The protein belongs to the UbiA prenyltransferase family. Protoheme IX farnesyltransferase subfamily.

It localises to the cell inner membrane. The catalysed reaction is heme b + (2E,6E)-farnesyl diphosphate + H2O = Fe(II)-heme o + diphosphate. The protein operates within porphyrin-containing compound metabolism; heme O biosynthesis; heme O from protoheme: step 1/1. Converts heme B (protoheme IX) to heme O by substitution of the vinyl group on carbon 2 of heme B porphyrin ring with a hydroxyethyl farnesyl side group. This Pseudoalteromonas translucida (strain TAC 125) protein is Protoheme IX farnesyltransferase 1.